Consider the following 35-residue polypeptide: U1-theraphotoxin-Hs1f (35 aa).

3 disulfides stabilise this stretch: C3–C16, C7–C27, and C21–C32.

It belongs to the neurotoxin 12 (Hwtx-2) family. 02 (Hwtx-2) subfamily. Expressed by the venom gland.

Its subcellular location is the secreted. Its function is as follows. Blocks neuromuscular transmission. Acts cooperatively to potentiate the activity of huwentoxin-I. Paralyzes locusts and kills mice following intracerebroventricular injection. In Cyriopagopus schmidti (Chinese bird spider), this protein is U1-theraphotoxin-Hs1f.